The following is a 414-amino-acid chain: Transforming growth factor beta-2 proprotein (414 aa).

A signal peptide spans 1-20 (MHYCVLSAFLLLHLVTVALS). Asn-72, Asn-140, and Asn-241 each carry an N-linked (GlcNAc...) asparagine glycan. 4 disulfides stabilise this stretch: Cys-309–Cys-318, Cys-317–Cys-380, Cys-346–Cys-411, and Cys-350–Cys-413.

This sequence belongs to the TGF-beta family. As to quaternary structure, interacts with the serine proteases, HTRA1 and HTRA3. Interacts with ASPN. Interacts with MFAP5. Interacts with Transforming growth factor beta-2 (TGF-beta-2) chain; interaction is non-covalent and maintains (TGF-beta-2) in a latent state. Interacts with LRRC32/GARP; leading to regulate activation of TGF-beta-2. Interacts with NREP; the interaction results in a decrease in TGFB2 autoinduction. In terms of assembly, transforming growth factor beta-2: Homodimer; disulfide-linked. Transforming growth factor beta-2: Interacts with TGF-beta receptors (TGFBR1 and TGFBR2), leading to signal transduction. Post-translationally, the precursor proprotein is cleaved in the Golgi apparatus to form Transforming growth factor beta-2 (TGF-beta-2) and Latency-associated peptide (LAP) chains, which remain non-covalently linked, rendering TGF-beta-2 inactive.

It localises to the secreted. The protein localises to the extracellular space. Its subcellular location is the extracellular matrix. Functionally, precursor of the Latency-associated peptide (LAP) and Transforming growth factor beta-2 (TGF-beta-2) chains, which constitute the regulatory and active subunit of TGF-beta-2, respectively. Its function is as follows. Required to maintain the Transforming growth factor beta-2 (TGF-beta-2) chain in a latent state during storage in extracellular matrix. Associates non-covalently with TGF-beta-2 and regulates its activation via interaction with 'milieu molecules', such as LTBP1 and LRRC32/GARP, that control activation of TGF-beta-2. In terms of biological role, multifunctional protein that regulates various processes such as angiogenesis and heart development. Activation into mature form follows different steps: following cleavage of the proprotein in the Golgi apparatus, Latency-associated peptide (LAP) and Transforming growth factor beta-2 (TGF-beta-2) chains remain non-covalently linked rendering TGF-beta-2 inactive during storage in extracellular matrix. At the same time, LAP chain interacts with 'milieu molecules', such as LTBP1 and LRRC32/GARP, that control activation of TGF-beta-2 and maintain it in a latent state during storage in extracellular milieus. Once activated following release of LAP, TGF-beta-2 acts by binding to TGF-beta receptors (TGFBR1 and TGFBR2), which transduce signal. This chain is Transforming growth factor beta-2 proprotein (TGFB2), found in Bos taurus (Bovine).